The sequence spans 248 residues: 1-(5-phosphoribosyl)-5-[(5-phosphoribosylamino)methylideneamino] imidazole-4-carboxamide isomerase (248 aa).

Residue aspartate 8 is the Proton acceptor of the active site. The active-site Proton donor is the aspartate 131.

It belongs to the HisA/HisF family.

The protein resides in the cytoplasm. The enzyme catalyses 1-(5-phospho-beta-D-ribosyl)-5-[(5-phospho-beta-D-ribosylamino)methylideneamino]imidazole-4-carboxamide = 5-[(5-phospho-1-deoxy-D-ribulos-1-ylimino)methylamino]-1-(5-phospho-beta-D-ribosyl)imidazole-4-carboxamide. The protein operates within amino-acid biosynthesis; L-histidine biosynthesis; L-histidine from 5-phospho-alpha-D-ribose 1-diphosphate: step 4/9. This chain is 1-(5-phosphoribosyl)-5-[(5-phosphoribosylamino)methylideneamino] imidazole-4-carboxamide isomerase, found in Paracidovorax citrulli (strain AAC00-1) (Acidovorax citrulli).